The following is a 142-amino-acid chain: Hemoglobin subunit alpha-A (142 aa).

Residues 2–142 (VLSANDKSNV…VGTVLTAKYR (141 aa)) enclose the Globin domain. Residue histidine 59 coordinates O2. Heme b is bound at residue histidine 88.

The protein belongs to the globin family. In terms of assembly, heterotetramer of two alpha chains and two beta chains. As to expression, red blood cells.

In terms of biological role, involved in oxygen transport from the lung to the various peripheral tissues. The sequence is that of Hemoglobin subunit alpha-A (HBAA) from Columba livia (Rock dove).